The chain runs to 730 residues: Neuroligin-like protein glit-1 (730 aa).

Residues 1–18 form the signal peptide; sequence MFTGTIFNSLFTLPLVIS. At 19–663 the chain is on the extracellular side; the sequence is QFVPPPTRPV…EIMVFKWITG (645 aa). Residues asparagine 103, asparagine 320, asparagine 445, asparagine 512, asparagine 557, asparagine 564, and asparagine 604 are each glycosylated (N-linked (GlcNAc...) asparagine). Residues 664–684 traverse the membrane as a helical segment; sequence VNVIIIALLIVLAGAFGYMVW. The Cytoplasmic segment spans residues 685–730; sequence GNKEDEEAAYKAENHQLVEYRDTGHSVSDATISSRTRSPRSRITNL.

It belongs to the type-B carboxylesterase/lipase family. Expressed in the pharynx, intestine, and in several cells in the head including dopaminergic neurons.

The protein localises to the cell membrane. In terms of biological role, probable neuronal cell surface protein thought to be involved in cell-cell-interactions. Confers protection against oxidative stress. Plays a role in protecting dopaminergic neurons against oxidative stress-induced neurodegeneration. The sequence is that of Neuroligin-like protein glit-1 from Caenorhabditis elegans.